Reading from the N-terminus, the 202-residue chain is Orotate phosphoribosyltransferase (202 aa).

5-phospho-alpha-D-ribose 1-diphosphate is bound at residue 113 to 121; the sequence is EDIITTGGS. Orotate-binding residues include Thr-117 and Arg-145.

This sequence belongs to the purine/pyrimidine phosphoribosyltransferase family. PyrE subfamily. As to quaternary structure, homodimer. The cofactor is Mg(2+).

It carries out the reaction orotidine 5'-phosphate + diphosphate = orotate + 5-phospho-alpha-D-ribose 1-diphosphate. It participates in pyrimidine metabolism; UMP biosynthesis via de novo pathway; UMP from orotate: step 1/2. Its function is as follows. Catalyzes the transfer of a ribosyl phosphate group from 5-phosphoribose 1-diphosphate to orotate, leading to the formation of orotidine monophosphate (OMP). The polypeptide is Orotate phosphoribosyltransferase (Campylobacter lari (strain RM2100 / D67 / ATCC BAA-1060)).